We begin with the raw amino-acid sequence, 128 residues long: MTEPEVNPKAYPLADAQLTKTLLDLVQQSANYKQLRKGANEATKTLNRGIAEFIVMAADAEPLEIILHLPLLCEDKNVPYVFVRSKQALGRACGVSRPVIACSVTIKEGSQLKPQIQSVQQAIERLLV.

The interval arginine 36–arginine 48 is interaction with U4 snRNA and U4atac snRNA. Positions serine 96 to valine 128 are important for U4 snRNA-binding.

The protein belongs to the eukaryotic ribosomal protein eL8 family. In terms of assembly, identified in the spliceosome B complex. Component of the U4/U6-U5 tri-snRNP complex. Part of the small subunit (SSU) processome, composed of more than 70 proteins and the RNA chaperone small nucleolar RNA (snoRNA) U3.

Its subcellular location is the nucleus. The protein resides in the nucleolus. Part of the small subunit (SSU) processome, first precursor of the small eukaryotic ribosomal subunit. During the assembly of the SSU processome in the nucleolus, many ribosome biogenesis factors, an RNA chaperone and ribosomal proteins associate with the nascent pre-rRNA and work in concert to generate RNA folding, modifications, rearrangements and cleavage as well as targeted degradation of pre-ribosomal RNA by the RNA exosome. Involved in pre-mRNA splicing as component of the spliceosome. Binds to the 5'-stem-loop of U4 snRNA and thereby contributes to spliceosome assembly. The protein undergoes a conformational change upon RNA-binding. Core component of box C/D small nucleolar ribonucleoprotein (snoRNP) complexes that function in methylation of multiple sites on ribosomal RNAs (rRNAs) and messenger RNAs (mRNAs). This is NHP2-like protein 1 from Xenopus laevis (African clawed frog).